We begin with the raw amino-acid sequence, 496 residues long: Cytochrome P450 71AV8 (496 aa).

The helical transmembrane segment at 3-23 threads the bilayer; it reads ISIPTTLGLAVIIFIIFKLLT. Cysteine 432 contributes to the heme binding site.

It belongs to the cytochrome P450 family. Requires heme as cofactor.

It is found in the membrane. In terms of biological role, valencene oxidase, which preferentially hydroylates the C2 position of (+)-valencene in the trans-orientation, producing trans-nootkatol that can be further oxidized to (+)-nootkatone. Can also catalyze the three-step conversion of germacrene A to germacra-1(10),4,11(13)-trien-12-oic acid and the partial conversion of the non-natural substrate amorpha-4,11-diene into artemisinic alcohol and artemisinic aldehyde. The polypeptide is Cytochrome P450 71AV8 (CYP71AV8) (Cichorium intybus (Chicory)).